The chain runs to 386 residues: Succinyl-diaminopimelate desuccinylase (386 aa).

Position 77 (H77) interacts with Zn(2+). D79 is an active-site residue. D110 lines the Zn(2+) pocket. The Proton acceptor role is filled by E144. The Zn(2+) site is built by E145, E173, and H359.

Belongs to the peptidase M20A family. DapE subfamily. In terms of assembly, homodimer. Zn(2+) is required as a cofactor. Requires Co(2+) as cofactor.

It carries out the reaction N-succinyl-(2S,6S)-2,6-diaminopimelate + H2O = (2S,6S)-2,6-diaminopimelate + succinate. It participates in amino-acid biosynthesis; L-lysine biosynthesis via DAP pathway; LL-2,6-diaminopimelate from (S)-tetrahydrodipicolinate (succinylase route): step 3/3. Catalyzes the hydrolysis of N-succinyl-L,L-diaminopimelic acid (SDAP), forming succinate and LL-2,6-diaminopimelate (DAP), an intermediate involved in the bacterial biosynthesis of lysine and meso-diaminopimelic acid, an essential component of bacterial cell walls. This is Succinyl-diaminopimelate desuccinylase from Methylibium petroleiphilum (strain ATCC BAA-1232 / LMG 22953 / PM1).